The chain runs to 380 residues: Chaperone protein DnaJ (380 aa).

The 66-residue stretch at 6–71 (DYYESLEVSR…QKRAAYDRYG (66 aa)) folds into the J domain. The CR-type zinc finger occupies 136–215 (GVTKDVEVRT…CHGTGTEAKT (80 aa)). The Zn(2+) site is built by C149, C152, C167, C170, C189, C192, C203, and C206. CXXCXGXG motif repeat units follow at residues 149–156 (CEACHGSG), 167–174 (CPTCHGAG), 189–196 (CPTCHGSG), and 203–210 (CKVCHGTG).

It belongs to the DnaJ family. As to quaternary structure, homodimer. Zn(2+) is required as a cofactor.

Its subcellular location is the cytoplasm. Participates actively in the response to hyperosmotic and heat shock by preventing the aggregation of stress-denatured proteins and by disaggregating proteins, also in an autonomous, DnaK-independent fashion. Unfolded proteins bind initially to DnaJ; upon interaction with the DnaJ-bound protein, DnaK hydrolyzes its bound ATP, resulting in the formation of a stable complex. GrpE releases ADP from DnaK; ATP binding to DnaK triggers the release of the substrate protein, thus completing the reaction cycle. Several rounds of ATP-dependent interactions between DnaJ, DnaK and GrpE are required for fully efficient folding. Also involved, together with DnaK and GrpE, in the DNA replication of plasmids through activation of initiation proteins. The polypeptide is Chaperone protein DnaJ (Gluconobacter oxydans (strain 621H) (Gluconobacter suboxydans)).